The primary structure comprises 473 residues: ATP synthase subunit beta (473 aa).

158–165 lines the ATP pocket; the sequence is GGAGVGKT.

It belongs to the ATPase alpha/beta chains family. F-type ATPases have 2 components, CF(1) - the catalytic core - and CF(0) - the membrane proton channel. CF(1) has five subunits: alpha(3), beta(3), gamma(1), delta(1), epsilon(1). CF(0) has three main subunits: a(1), b(2) and c(9-12). The alpha and beta chains form an alternating ring which encloses part of the gamma chain. CF(1) is attached to CF(0) by a central stalk formed by the gamma and epsilon chains, while a peripheral stalk is formed by the delta and b chains.

It localises to the cell membrane. The catalysed reaction is ATP + H2O + 4 H(+)(in) = ADP + phosphate + 5 H(+)(out). Functionally, produces ATP from ADP in the presence of a proton gradient across the membrane. The catalytic sites are hosted primarily by the beta subunits. This chain is ATP synthase subunit beta, found in Geobacillus thermodenitrificans (strain NG80-2).